The sequence spans 316 residues: tRNA selenocysteine 1-associated protein 1-like (316 aa).

RRM domains lie at 6–89 (TSLW…YATY) and 99–178 (FSVF…IAVN). The segment covering 239-248 (PPMGMPPMPP) has biased composition (pro residues). Positions 239-285 (PPMGMPPMPPDMQGSTEAHDGTEEVEEDPSEDPNPQVDVEELNRQYM) are disordered.

The protein belongs to the RRM TRSPAP family.

The protein localises to the nucleus. Its subcellular location is the cytoplasm. Its function is as follows. Involved in the early steps of selenocysteine biosynthesis and tRNA(Sec) charging to the later steps resulting in the cotranslational incorporation of selenocysteine into selenoproteins. The sequence is that of tRNA selenocysteine 1-associated protein 1-like (trnau1apl) from Danio rerio (Zebrafish).